A 244-amino-acid polypeptide reads, in one-letter code: Na(+)-translocating NADH-quinone reductase subunit E (244 aa).

A run of 6 helical transmembrane segments spans residues 11-31 (LLGI…TFLG), 47-67 (GLGM…WLIH), 90-110 (FLEL…LELL), 123-143 (GIFL…LFGI), 153-173 (VVFS…FATI), and 189-209 (MGIS…LTGI).

Belongs to the NqrDE/RnfAE family. In terms of assembly, composed of six subunits; NqrA, NqrB, NqrC, NqrD, NqrE and NqrF.

The protein localises to the cell inner membrane. It catalyses the reaction a ubiquinone + n Na(+)(in) + NADH + H(+) = a ubiquinol + n Na(+)(out) + NAD(+). Functionally, NQR complex catalyzes the reduction of ubiquinone-1 to ubiquinol by two successive reactions, coupled with the transport of Na(+) ions from the cytoplasm to the periplasm. NqrA to NqrE are probably involved in the second step, the conversion of ubisemiquinone to ubiquinol. This chain is Na(+)-translocating NADH-quinone reductase subunit E, found in Chlamydia muridarum (strain MoPn / Nigg).